Consider the following 129-residue polypeptide: Cocaine- and amphetamine-regulated transcript protein (129 aa).

Positions 1–27 (MESSRLRLLPVLGAALLLLLPLLGAGA) are cleaved as a signal peptide. Tyr-41 bears the Phosphotyrosine mark. Ser-48 carries the post-translational modification Phosphoserine. Intrachain disulfides connect Cys-95/Cys-113, Cys-101/Cys-121, and Cys-115/Cys-128.

This sequence belongs to the CART family. In terms of tissue distribution, neuroendocrine tissues. Predominantly expressed in the hypothalamus, pituitary, and longitudinal muscle-myenteric plexus. Abundant expression is also seen in the midbrain/thalamus and eye. A lower level expression is seen in the other brain regions and adrenal.

It is found in the secreted. Satiety factor closely associated with the actions of leptin and neuropeptide y; this anorectic peptide inhibits both normal and starvation-induced feeding and completely blocks the feeding response induced by neuropeptide Y and regulated by leptin in the hypothalamus. This Rattus norvegicus (Rat) protein is Cocaine- and amphetamine-regulated transcript protein (Cartpt).